The sequence spans 742 residues: Photosystem I P700 chlorophyll a apoprotein A2 2 (742 aa).

8 consecutive transmembrane segments (helical) span residues 46 to 69 (IFATHFGHVAIIFLWASSLLFHVA), 135 to 158 (LYQGSIFLLLLAALFLFAGWLHLQ), 175 to 199 (LNHHLAGLFGVSSLAWAGHLIHVAI), 273 to 291 (MAHHHLAIAVIFIIAGHMY), 334 to 357 (LHFQLSIHLAALGTALSLVAQHMY), 373 to 399 (AALYTHHQYIAGFLMVGAFAHAGIFWV), 421 to 443 (AIISHLSWVSLFLGFHTLGLYVH), and 524 to 542 (FLVHHAIALGLHTTTLICV). [4Fe-4S] cluster is bound by residues C566 and C575. Helical transmembrane passes span 583 to 604 (SFYLALFWMLNLLGWVTFYWHW) and 651 to 673 (LSVWAWMFLFGHLVWATGFMFLI). The chlorophyll a site is built by H662, M670, and Y678. W679 serves as a coordination point for phylloquinone. Residues 715–735 (LVGLAHFTVGYILTYAAFLIA) form a helical membrane-spanning segment.

The protein belongs to the PsaA/PsaB family. The PsaA/B heterodimer binds the P700 chlorophyll special pair and subsequent electron acceptors. PSI consists of a core antenna complex that captures photons, and an electron transfer chain that converts photonic excitation into a charge separation. The cyanobacterial PSI reaction center is composed of one copy each of PsaA,B,C,D,E,F,I,J,K,L,M and X, and forms trimeric complexes. Requires PSI electron transfer chain: 5 chlorophyll a, 1 chlorophyll a', 2 phylloquinones and 3 4Fe-4S clusters. PSI core antenna: 90 chlorophyll a, 22 carotenoids, 3 phospholipids and 1 galactolipid. P700 is a chlorophyll a/chlorophyll a' dimer, A0 is one or more chlorophyll a, A1 is one or both phylloquinones and FX is a shared 4Fe-4S iron-sulfur center. as cofactor.

Its subcellular location is the cellular thylakoid membrane. The enzyme catalyses reduced [plastocyanin] + hnu + oxidized [2Fe-2S]-[ferredoxin] = oxidized [plastocyanin] + reduced [2Fe-2S]-[ferredoxin]. In terms of biological role, psaA and PsaB bind P700, the primary electron donor of photosystem I (PSI), as well as the electron acceptors A0, A1 and FX. PSI is a plastocyanin/cytochrome c6-ferredoxin oxidoreductase, converting photonic excitation into a charge separation, which transfers an electron from the donor P700 chlorophyll pair to the spectroscopically characterized acceptors A0, A1, FX, FA and FB in turn. Oxidized P700 is reduced on the lumenal side of the thylakoid membrane by plastocyanin or cytochrome c6. The protein is Photosystem I P700 chlorophyll a apoprotein A2 2 of Trichormus variabilis (strain ATCC 29413 / PCC 7937) (Anabaena variabilis).